The primary structure comprises 335 residues: Leucine-rich repeat-containing protein 39 (335 aa).

Positions 10–47 form a coiled coil; the sequence is AVNAVKEVWEKRIKKLNEDLKREKEFQHKLVRIWEERV. 9 LRR repeats span residues 84 to 105, 107 to 128, 130 to 151, 153 to 176, 177 to 197, 200 to 221, 223 to 244, 246 to 267, and 269 to 290; these read QLQE…IGRF, NLIV…IGLL, RLQE…LSNC, SLEK…SNLL, KLTH…AVLN, ALEW…IERM, NLHT…ISNM, NLGT…MEEM, and NLRF…PPSE.

In terms of assembly, interacts with MYH7 (via C-terminus). In terms of tissue distribution, highly expressed in skeletal muscle and heart. Not detected in other tissues tested.

It is found in the cytoplasm. The protein localises to the myofibril. The protein resides in the sarcomere. It localises to the m line. In terms of biological role, component of the sarcomeric M-band which plays a role in myocyte response to biomechanical stress. May regulate expression of other M-band proteins via an SRF-dependent pathway. Important for normal contractile function in heart. This chain is Leucine-rich repeat-containing protein 39 (LRRC39), found in Homo sapiens (Human).